A 207-amino-acid polypeptide reads, in one-letter code: NADH-quinone oxidoreductase subunit C (207 aa).

It belongs to the complex I 30 kDa subunit family. NDH-1 is composed of 14 different subunits. Subunits NuoB, C, D, E, F, and G constitute the peripheral sector of the complex.

The protein resides in the cell inner membrane. It catalyses the reaction a quinone + NADH + 5 H(+)(in) = a quinol + NAD(+) + 4 H(+)(out). Functionally, NDH-1 shuttles electrons from NADH, via FMN and iron-sulfur (Fe-S) centers, to quinones in the respiratory chain. The immediate electron acceptor for the enzyme in this species is believed to be ubiquinone. Couples the redox reaction to proton translocation (for every two electrons transferred, four hydrogen ions are translocated across the cytoplasmic membrane), and thus conserves the redox energy in a proton gradient. The sequence is that of NADH-quinone oxidoreductase subunit C from Rickettsia felis (strain ATCC VR-1525 / URRWXCal2) (Rickettsia azadi).